A 191-amino-acid polypeptide reads, in one-letter code: Probable calcium-binding protein CML8 (191 aa).

The interval 1–41 is disordered; sequence MASKYRGYYHDEASSAAGGGGGGGGGDGYRREKQVRKKRLT. Positions 17–27 are enriched in gly residues; the sequence is AGGGGGGGGGD. EF-hand domains follow at residues 43–78, 79–114, 116–151, and 152–187; these read QKRK…LGFE, MTPE…KMGE, DARE…TGEP, and FTLD…IGFG. Ca(2+) contacts are provided by aspartate 56, aspartate 58, serine 60, threonine 62, glutamate 67, aspartate 92, aspartate 94, serine 96, threonine 98, glutamate 103, aspartate 129, aspartate 131, asparagine 133, lysine 135, aspartate 140, aspartate 165, asparagine 167, aspartate 169, glutamate 171, and glutamate 176.

Its function is as follows. Potential calcium sensor. In Oryza sativa subsp. japonica (Rice), this protein is Probable calcium-binding protein CML8 (CML8).